The primary structure comprises 134 residues: Ribosome-binding factor A (134 aa).

Belongs to the RbfA family. Monomer. Binds 30S ribosomal subunits, but not 50S ribosomal subunits or 70S ribosomes.

The protein resides in the cytoplasm. Functionally, one of several proteins that assist in the late maturation steps of the functional core of the 30S ribosomal subunit. Associates with free 30S ribosomal subunits (but not with 30S subunits that are part of 70S ribosomes or polysomes). Required for efficient processing of 16S rRNA. May interact with the 5'-terminal helix region of 16S rRNA. This is Ribosome-binding factor A from Sinorhizobium medicae (strain WSM419) (Ensifer medicae).